Consider the following 778-residue polypeptide: Preasperterpenoid A synthase PvPS (778 aa).

Residues 1–414 are terpene cyclase; it reads MAATKKSTAT…HRYNFHKPAA (414 aa). Mg(2+) is bound by residues Asp-176 and Asp-180. Asp-176 contacts substrate. Positions 176-180 match the DDXXD 1 motif; that stretch reads DDILD. Substrate contacts are provided by residues 266 to 269, Asn-310, 314 to 318, and 406 to 407; these read RVIN, SWEKE, and RY. The NSE/DTE motif lies at 310 to 318; sequence NDYFSWEKE. Over residues 414-431 the composition is skewed to basic and acidic residues; sequence AKENEDTDDEGAKSDDSK. The interval 415 to 778 is prenyltransferase; the sequence is KENEDTDDEG…LRLLLKRLQV (364 aa). The tract at residues 416 to 454 is disordered; the sequence is ENEDTDDEGAKSDDSKTTLNDSTDSTVVDVKTPATSGLL. Positions 499, 502, and 531 each coordinate isopentenyl diphosphate. The Mg(2+) site is built by Asp-538 and Asp-542. A DDXXD 2 motif is present at residues 538–542; sequence DDIED. A dimethylallyl diphosphate-binding site is contributed by Arg-547. Arg-548 serves as a coordination point for isopentenyl diphosphate. Dimethylallyl diphosphate is bound by residues Lys-625, Thr-626, Gln-662, Asn-669, Lys-679, and Lys-689.

The protein in the N-terminal section; belongs to the terpene synthase family. This sequence in the C-terminal section; belongs to the FPP/GGPP synthase family. Hexamer. Mg(2+) serves as cofactor.

The catalysed reaction is isopentenyl diphosphate + (2E,6E)-farnesyl diphosphate = (2E,6E,10E)-geranylgeranyl diphosphate + diphosphate. It catalyses the reaction isopentenyl diphosphate + (2E,6E,10E)-geranylgeranyl diphosphate = (2E,6E,10E,14E)-geranylfarnesyl diphosphate + diphosphate. It carries out the reaction (2E,6E,10E,14E)-geranylfarnesyl diphosphate = preasperterpenoid A + diphosphate. It functions in the pathway secondary metabolite biosynthesis; terpenoid biosynthesis. Bifunctional sesterterpene synthase that possesses both prenyl transferase and terpene cyclase activity, converting isopentenyl diphosphate and dimethylallyl diphosphate into geranylfarnesyl diphosphate (GFPP) and further converting GFPP into preasperterpenoid A. The sequence is that of Preasperterpenoid A synthase PvPS from Talaromyces verruculosus (Penicillium verruculosum).